The primary structure comprises 376 residues: GTPase Obg (376 aa).

The region spanning 2-161 (ASFVDEVLIR…RVVHVELRIV (160 aa)) is the Obg domain. One can recognise an OBG-type G domain in the interval 162 to 328 (ADVGFVGLPN…LQEAFVRLSD (167 aa)). GTP is bound by residues 168–175 (GLPNAGKS), 193–197 (FTTRI), 215–218 (DVPG), 282–285 (TKLD), and 309–311 (SVH). Positions 175 and 195 each coordinate Mg(2+).

This sequence belongs to the TRAFAC class OBG-HflX-like GTPase superfamily. OBG GTPase family. Monomer. The cofactor is Mg(2+).

Its subcellular location is the cytoplasm. An essential GTPase which binds GTP, GDP and possibly (p)ppGpp with moderate affinity, with high nucleotide exchange rates and a fairly low GTP hydrolysis rate. Plays a role in control of the cell cycle, stress response, ribosome biogenesis and in those bacteria that undergo differentiation, in morphogenesis control. The protein is GTPase Obg of Treponema pallidum (strain Nichols).